The primary structure comprises 521 residues: Apolipoprotein N-acyltransferase (521 aa).

6 consecutive transmembrane segments (helical) span residues 27–47 (VLLALSFPSPGISPLAWIAFA), 64–84 (LGFVTGLAAYAGILYWITIVV), 93–113 (IVSVGVLSMLVSYLALYPAVV), 125–145 (ISLLISFPLLWVGLEYGRAFL), 167–187 (IADITGVYGLSFLIALANVVL), and 202–222 (YPVKSVVLLLVLLLVTIAYGF). Residues 239 to 483 (IQGNIDQNIK…EAVLNGEVRL (245 aa)) enclose the CN hydrolase domain. Residue glutamate 281 is the Proton acceptor of the active site. The active site involves lysine 344. Cysteine 394 functions as the Nucleophile in the catalytic mechanism. Residues 493 to 513 (YGDVFAWACVAGAAVVAALAF) form a helical membrane-spanning segment.

The protein belongs to the CN hydrolase family. Apolipoprotein N-acyltransferase subfamily.

The protein resides in the cell inner membrane. It carries out the reaction N-terminal S-1,2-diacyl-sn-glyceryl-L-cysteinyl-[lipoprotein] + a glycerophospholipid = N-acyl-S-1,2-diacyl-sn-glyceryl-L-cysteinyl-[lipoprotein] + a 2-acyl-sn-glycero-3-phospholipid + H(+). Its pathway is protein modification; lipoprotein biosynthesis (N-acyl transfer). Catalyzes the phospholipid dependent N-acylation of the N-terminal cysteine of apolipoprotein, the last step in lipoprotein maturation. This Geobacter metallireducens (strain ATCC 53774 / DSM 7210 / GS-15) protein is Apolipoprotein N-acyltransferase.